The sequence spans 212 residues: MKLSKYIDHTLLKPQATEKDILKLIEEAKTYDFASVCVNPSWVKLAYENLKDTDVKVCTVVGFPLGATSTASKVYETKVAIEDGADEIDMVISVGQLKSGNDEYVKEEIKKIVEASKNKLVKVIIETCLLTEEEKVKACTLSKEAGADYVKTSTGFSTGGAKPEDIKLMRETVGKNMGVKASGGIHTREEMEVMIENGATRIGASCGVELVK.

The active-site Proton donor/acceptor is the D89. K151 acts as the Schiff-base intermediate with acetaldehyde in catalysis. The Proton donor/acceptor role is filled by K180.

Belongs to the DeoC/FbaB aldolase family. DeoC type 1 subfamily.

The protein resides in the cytoplasm. The catalysed reaction is 2-deoxy-D-ribose 5-phosphate = D-glyceraldehyde 3-phosphate + acetaldehyde. It functions in the pathway carbohydrate degradation; 2-deoxy-D-ribose 1-phosphate degradation; D-glyceraldehyde 3-phosphate and acetaldehyde from 2-deoxy-alpha-D-ribose 1-phosphate: step 2/2. In terms of biological role, catalyzes a reversible aldol reaction between acetaldehyde and D-glyceraldehyde 3-phosphate to generate 2-deoxy-D-ribose 5-phosphate. The protein is Deoxyribose-phosphate aldolase of Clostridium botulinum (strain Kyoto / Type A2).